Here is an 827-residue protein sequence, read N- to C-terminus: MTFCYPCRAFALLTRGFTSFMSGWPRIYYKLLNLPLSILVKSKSIPADPAPELGLDTSRPIMYVLPYNSKADLLTLRAQCLAHDLPDPLEPLEIDGTLLPRYVFIHGGPRVFTYYTPKEESIKLFHDYLDLHRSNPNLDVQMVPVSVMFGRAPGREKGEVNPPLRMLNGVQKFFAVLWLGRDSFVRFSPSVSLRRMADEHGTDKTIAQKLARVARMHFARQRLAAVGPRLPARQDLFNKLLASRAIAKAVEDEARSKKISHEKAQQNAIALMEEIAANFSYEMIRLTDRILGFTWNRLYQGINVHNAERVRQLAHDGHELVYVPCHRSHMDYLLLSYVLYHQGLVPPHIAAGINLNFWPAGPIFRRLGAFFIRRTFKGNKLYSTVFREYLGELFSRGYSVEYFVEGGRSRTGRLLDPKTGTLSMTIQAMLRGGTRPITLIPIYIGYEHVMEVGTYAKELRGATKEKESLPQMLRGLSKLRNLGQGYVNFGEPMPLMTYLNQHVPDWRESIDPIEAVRPAWLTPTVNNIAADLMVRINNAGAANAMNLCCTALLASRQRSLTREQLTEQLNCYLDLMRNVPYSTDSTVPSASASELIDHALQMNKFEVEKDTIGDIIILPREQAVLMTYYRNNIAHMLVLPSLMAAIVTQHRHISRDVLMEHVNVLYPMLKAELFLRWDRDELPDVIDALANEMQRQGLITLQDDELHINPSHSRTLQLLAAGARETLQRYAITFWLLSANPSINRGTLEKESRTVAQRLSVLHGINAPEFFDKAVFSSLVLTLRDEGYISDSGDAEPAETMKVYQLLAELITSDVRLTIESATQGEG.

The HXXXXD motif motif lies at 325–330 (CHRSHM).

Belongs to the GPAT/DAPAT family.

The protein localises to the cell inner membrane. It carries out the reaction sn-glycerol 3-phosphate + an acyl-CoA = a 1-acyl-sn-glycero-3-phosphate + CoA. The protein operates within phospholipid metabolism; CDP-diacylglycerol biosynthesis; CDP-diacylglycerol from sn-glycerol 3-phosphate: step 1/3. The protein is Glycerol-3-phosphate acyltransferase of Shigella boydii serotype 4 (strain Sb227).